A 264-amino-acid chain; its full sequence is 3-methyl-2-oxobutanoate hydroxymethyltransferase (264 aa).

The Mg(2+) site is built by Asp45 and Asp84. 3-methyl-2-oxobutanoate contacts are provided by residues 45–46 (DS), Asp84, and Lys112. Glu114 is a binding site for Mg(2+). Residue Glu181 is the Proton acceptor of the active site.

The protein belongs to the PanB family. In terms of assembly, homodecamer; pentamer of dimers. Requires Mg(2+) as cofactor.

It is found in the cytoplasm. It carries out the reaction 3-methyl-2-oxobutanoate + (6R)-5,10-methylene-5,6,7,8-tetrahydrofolate + H2O = 2-dehydropantoate + (6S)-5,6,7,8-tetrahydrofolate. It functions in the pathway cofactor biosynthesis; (R)-pantothenate biosynthesis; (R)-pantoate from 3-methyl-2-oxobutanoate: step 1/2. Its function is as follows. Catalyzes the reversible reaction in which hydroxymethyl group from 5,10-methylenetetrahydrofolate is transferred onto alpha-ketoisovalerate to form ketopantoate. The chain is 3-methyl-2-oxobutanoate hydroxymethyltransferase from Shewanella putrefaciens (strain CN-32 / ATCC BAA-453).